The following is a 118-amino-acid chain: SPbeta prophage-derived uncharacterized protein YoqR (118 aa).

The protein is SPbeta prophage-derived uncharacterized protein YoqR (yoqR) of Bacillus subtilis (strain 168).